The sequence spans 177 residues: ATP synthase subunit b, chloroplastic (177 aa).

Residues 26 to 44 traverse the membrane as a helical segment; the sequence is IINLSIVLFVVIRFLGEAL.

The protein belongs to the ATPase B chain family. As to quaternary structure, F-type ATPases have 2 components, F(1) - the catalytic core - and F(0) - the membrane proton channel. F(1) has five subunits: alpha(3), beta(3), gamma(1), delta(1), epsilon(1). F(0) has four main subunits: a(1), b(1), b'(1) and c(10-14). The alpha and beta chains form an alternating ring which encloses part of the gamma chain. F(1) is attached to F(0) by a central stalk formed by the gamma and epsilon chains, while a peripheral stalk is formed by the delta, b and b' chains.

The protein resides in the plastid. Its subcellular location is the chloroplast thylakoid membrane. Its function is as follows. F(1)F(0) ATP synthase produces ATP from ADP in the presence of a proton or sodium gradient. F-type ATPases consist of two structural domains, F(1) containing the extramembraneous catalytic core and F(0) containing the membrane proton channel, linked together by a central stalk and a peripheral stalk. During catalysis, ATP synthesis in the catalytic domain of F(1) is coupled via a rotary mechanism of the central stalk subunits to proton translocation. Functionally, component of the F(0) channel, it forms part of the peripheral stalk, linking F(1) to F(0). This is ATP synthase subunit b, chloroplastic from Bigelowiella natans (Pedinomonas minutissima).